The primary structure comprises 681 residues: Type VI secretion system spike protein VgrG1 (681 aa).

A disordered region spans residues 621 to 640 (NSGGSPSSGSGWGGKSPVDP).

This sequence belongs to the VgrG protein family.

The protein localises to the secreted. It catalyses the reaction L-arginyl-[protein] + NAD(+) = N(omega)-(ADP-D-ribosyl)-L-arginyl-[protein] + nicotinamide + H(+). Part of the type VI secretion system specialized secretion system, which delivers several virulence factors in both prokaryotic and eukaryotic cells during infection. Acts directly as an secreted effector with an actin ADP-ribosyltransferase activity that disrupts the host actin cytoskeleton, leading to a decrease in host cell viability and an increase in apoptosis. In Aeromonas hydrophila, this protein is Type VI secretion system spike protein VgrG1 (vgrG1).